A 232-amino-acid chain; its full sequence is 2-C-methyl-D-erythritol 4-phosphate cytidylyltransferase (232 aa).

This sequence belongs to the IspD/TarI cytidylyltransferase family. IspD subfamily.

It carries out the reaction 2-C-methyl-D-erythritol 4-phosphate + CTP + H(+) = 4-CDP-2-C-methyl-D-erythritol + diphosphate. The protein operates within isoprenoid biosynthesis; isopentenyl diphosphate biosynthesis via DXP pathway; isopentenyl diphosphate from 1-deoxy-D-xylulose 5-phosphate: step 2/6. Its function is as follows. Catalyzes the formation of 4-diphosphocytidyl-2-C-methyl-D-erythritol from CTP and 2-C-methyl-D-erythritol 4-phosphate (MEP). The polypeptide is 2-C-methyl-D-erythritol 4-phosphate cytidylyltransferase (Stenotrophomonas maltophilia (strain R551-3)).